The following is a 108-amino-acid chain: Class I hydrophobin 3 (108 aa).

The first 17 residues, 1-17 (MFFQTTIVAALAFLAVA), serve as a signal peptide directing secretion. 4 disulfide bridges follow: Cys-28–Cys-87, Cys-35–Cys-81, Cys-36–Cys-69, and Cys-88–Cys-101. Residue Asn-37 is glycosylated (N-linked (GlcNAc...) asparagine).

This sequence belongs to the fungal hydrophobin family. In terms of assembly, self-assembles to form functional amyloid fibrils called rodlets. Self-assembly into fibrillar rodlets occurs spontaneously at hydrophobic:hydrophilic interfaces and the rodlets further associate laterally to form amphipathic monolayers.

Its subcellular location is the secreted. The protein resides in the cell wall. Functionally, aerial growth, conidiation, and dispersal of filamentous fungi in the environment rely upon a capability of their secreting small amphipathic proteins called hydrophobins (HPBs) with low sequence identity. Class I can self-assemble into an outermost layer of rodlet bundles on aerial cell surfaces, conferring cellular hydrophobicity that supports fungal growth, development and dispersal; whereas Class II form highly ordered films at water-air interfaces through intermolecular interactions but contribute nothing to the rodlet structure. Vmh3 is a class I hydrophobin that is essential for the maintenance of the surface hydrophobicity of the mycelium and might be involved in the development of fruiting bodies. Plays an important role in hyphal resistance against environmental stress. Necessary for the efficient biodegradation of lignin. This is Class I hydrophobin 3 from Pleurotus ostreatus (Oyster mushroom).